A 308-amino-acid chain; its full sequence is D-alanine--D-alanine ligase (308 aa).

An ATP-grasp domain is found at 104–304 (KQALVPHGIP…YAELVERIVE (201 aa)). 131 to 187 (LPRPYVLKPVNEGSSVGVAIVRDDSNYGNPISRDALGPWQQFDRLLAEPFIKGRELT) contacts ATP. Positions 255, 271, and 273 each coordinate Mg(2+).

This sequence belongs to the D-alanine--D-alanine ligase family. Mg(2+) is required as a cofactor. It depends on Mn(2+) as a cofactor.

It is found in the cytoplasm. It catalyses the reaction 2 D-alanine + ATP = D-alanyl-D-alanine + ADP + phosphate + H(+). It participates in cell wall biogenesis; peptidoglycan biosynthesis. Its function is as follows. Cell wall formation. The polypeptide is D-alanine--D-alanine ligase (Sphingopyxis alaskensis (strain DSM 13593 / LMG 18877 / RB2256) (Sphingomonas alaskensis)).